The sequence spans 609 residues: Tyrosyl-DNA phosphodiesterase 1 (609 aa).

Positions 1–12 are enriched in polar residues; that stretch reads MSQESSYGKWTI. The disordered stretch occupies residues 1-154; the sequence is MSQESSYGKW…EYETSGEGQD (154 aa). A phosphoserine mark is found at Ser61, Ser119, and Ser132. Residues 127–143 show a composition bias toward basic and acidic residues; the sequence is KVEDRSPPDSHRAQRAD. At Thr148 the chain carries Phosphothreonine. Position 149 is a phosphoserine (Ser149). The Nucleophile role is filled by His264. Lys266 is a substrate binding site. Positions 401–404 are interaction with DNA; that stretch reads SIGS. Catalysis depends on His494, which acts as the Proton donor/acceptor. Lys496 contributes to the substrate binding site.

This sequence belongs to the tyrosyl-DNA phosphodiesterase family. In terms of assembly, monomer.

It localises to the nucleus. Its subcellular location is the cytoplasm. Its function is as follows. DNA repair enzyme that can remove a variety of covalent adducts from DNA through hydrolysis of a 3'-phosphodiester bond, giving rise to DNA with a free 3' phosphate. Catalyzes the hydrolysis of dead-end complexes between DNA and the topoisomerase I active site tyrosine residue. Hydrolyzes 3'-phosphoglycolates on protruding 3' ends on DNA double-strand breaks due to DNA damage by radiation and free radicals. Acts on blunt-ended double-strand DNA breaks and on single-stranded DNA. Has low 3'exonuclease activity and can remove a single nucleoside from the 3'end of DNA and RNA molecules with 3'hydroxyl groups. Has no exonuclease activity towards DNA or RNA with a 3'phosphate. The polypeptide is Tyrosyl-DNA phosphodiesterase 1 (Tdp1) (Rattus norvegicus (Rat)).